Reading from the N-terminus, the 361-residue chain is Chorismate synthase (361 aa).

NADP(+)-binding residues include Arg-48 and Arg-54. FMN is bound by residues Arg-125–Ser-127, Asn-240–Ala-241, Gly-286, Lys-301–Ser-305, and Arg-327.

It belongs to the chorismate synthase family. In terms of assembly, homotetramer. FMNH2 is required as a cofactor.

It catalyses the reaction 5-O-(1-carboxyvinyl)-3-phosphoshikimate = chorismate + phosphate. It functions in the pathway metabolic intermediate biosynthesis; chorismate biosynthesis; chorismate from D-erythrose 4-phosphate and phosphoenolpyruvate: step 7/7. Its function is as follows. Catalyzes the anti-1,4-elimination of the C-3 phosphate and the C-6 proR hydrogen from 5-enolpyruvylshikimate-3-phosphate (EPSP) to yield chorismate, which is the branch point compound that serves as the starting substrate for the three terminal pathways of aromatic amino acid biosynthesis. This reaction introduces a second double bond into the aromatic ring system. This Magnetococcus marinus (strain ATCC BAA-1437 / JCM 17883 / MC-1) protein is Chorismate synthase.